Consider the following 452-residue polypeptide: Type II methyltransferase M.EcaI (452 aa).

It belongs to the N(4)/N(6)-methyltransferase family.

The enzyme catalyses a 2'-deoxyadenosine in DNA + S-adenosyl-L-methionine = an N(6)-methyl-2'-deoxyadenosine in DNA + S-adenosyl-L-homocysteine + H(+). A beta subtype methylase, recognizes the double-stranded sequence 5'-GGTNACC-3', methylates A-5 on both strands and protects the DNA from cleavage by the EcaI endonuclease. This Enterobacter cloacae protein is Type II methyltransferase M.EcaI (ecaIM).